The sequence spans 1238 residues: Topoisomerase 1-associated factor 1 (1238 aa).

Residues Ser626 and Ser654 each carry the phosphoserine modification. A disordered region spans residues 1008–1051 (GIARSKKKDKRKRRKGEAKTNLPMFGDQDDERPQTVRERHGVFS). The span at 1010 to 1023 (ARSKKKDKRKRRKG) shows a compositional bias: basic residues. Residues 1038–1050 (ERPQTVRERHGVF) show a composition bias toward basic and acidic residues. A phosphoserine mark is found at Ser1056 and Ser1058. The tract at residues 1159–1218 (NNNNNQLSDDDVNSESRNSLGSSQPSNSQNMFQSEVYSRKESTKRSLEASAADESDEDEE) is disordered. Polar residues predominate over residues 1173-1194 (ESRNSLGSSQPSNSQNMFQSEV). Residues 1195-1205 (YSRKESTKRSL) show a composition bias toward basic and acidic residues. Over residues 1209–1218 (AADESDEDEE) the composition is skewed to acidic residues. Phosphoserine is present on Ser1213.

The protein belongs to the timeless family. In terms of assembly, component of the fork protection complex (FPC) consisting of TOF1 and CSM3. Interacts with WSS1 and ESC4.

The protein resides in the nucleus. Functionally, forms a fork protection complex (FPC) with CSM3 and which is required for chromosome segregation during meiosis and DNA damage repair. FPC coordinates leading and lagging strand synthesis and moves with the replication fork. FPC stabilizes replication forks in a configuration that is recognized by replication checkpoint sensors and protects stalled replication forks against the fork-releasing activity of RRM3 helicase. The protein is Topoisomerase 1-associated factor 1 (TOF1) of Saccharomyces cerevisiae (strain ATCC 204508 / S288c) (Baker's yeast).